The sequence spans 730 residues: 1,4-alpha-glucan branching enzyme GlgB (730 aa).

Catalysis depends on aspartate 405, which acts as the Nucleophile. Glutamate 458 serves as the catalytic Proton donor.

The protein belongs to the glycosyl hydrolase 13 family. GlgB subfamily. Monomer.

It catalyses the reaction Transfers a segment of a (1-&gt;4)-alpha-D-glucan chain to a primary hydroxy group in a similar glucan chain.. The protein operates within glycan biosynthesis; glycogen biosynthesis. Its function is as follows. Catalyzes the formation of the alpha-1,6-glucosidic linkages in glycogen by scission of a 1,4-alpha-linked oligosaccharide from growing alpha-1,4-glucan chains and the subsequent attachment of the oligosaccharide to the alpha-1,6 position. The protein is 1,4-alpha-glucan branching enzyme GlgB (glgB) of Haemophilus influenzae (strain ATCC 51907 / DSM 11121 / KW20 / Rd).